We begin with the raw amino-acid sequence, 109 residues long: Protein reprimo (109 aa).

2 N-linked (GlcNAc...) asparagine glycosylation sites follow: asparagine 7 and asparagine 18. The chain crosses the membrane as a helical span at residues 56-76 (VVQIAVMCVLSLTVVFGIFFL). Serine 98 carries the phosphoserine modification.

The protein belongs to the reprimo family.

The protein localises to the cytoplasm. It is found in the membrane. Functionally, may be involved in the regulation of p53-dependent G2 arrest of the cell cycle. Seems to induce cell cycle arrest by inhibiting CDK1 activity and nuclear translocation of the CDC2 cyclin B1 complex. This is Protein reprimo (RPRM) from Homo sapiens (Human).